The primary structure comprises 344 residues: tRNA(Ile)-lysidine synthase (344 aa).

43-48 (SGGADS) contributes to the ATP binding site.

This sequence belongs to the tRNA(Ile)-lysidine synthase family.

It localises to the cytoplasm. It carries out the reaction cytidine(34) in tRNA(Ile2) + L-lysine + ATP = lysidine(34) in tRNA(Ile2) + AMP + diphosphate + H(+). Ligates lysine onto the cytidine present at position 34 of the AUA codon-specific tRNA(Ile) that contains the anticodon CAU, in an ATP-dependent manner. Cytidine is converted to lysidine, thus changing the amino acid specificity of the tRNA from methionine to isoleucine. This is tRNA(Ile)-lysidine synthase from Bordetella bronchiseptica (strain ATCC BAA-588 / NCTC 13252 / RB50) (Alcaligenes bronchisepticus).